Reading from the N-terminus, the 528-residue chain is Protein WHAT'S THIS FACTOR 1 homolog, chloroplastic (528 aa).

The transit peptide at 1–73 (MEPKLLLSAH…KTRVVVEPVR (73 aa)) directs the protein to the chloroplast. The PORR domain maps to 80-408 (KELTFDSVVQ…VKEKMRALVS (329 aa)). The disordered stretch occupies residues 410–528 (PRFPRRGGPR…FPDGTPREKW (119 aa)). Residues 418–428 (PRKDEEGREVE) show a composition bias toward basic and acidic residues. Residues 429–491 (IDGSDADGEE…DDDDEDEEED (63 aa)) are compositionally biased toward acidic residues.

Its subcellular location is the plastid. The protein resides in the chloroplast. In terms of biological role, RNA-binding protein involved in group II intron splicing. Binds specific group II introns and promotes their splicing. Functions in the context of a heterodimer with the ribonuclease III domain-containing protein RNC1. The sequence is that of Protein WHAT'S THIS FACTOR 1 homolog, chloroplastic from Arabidopsis thaliana (Mouse-ear cress).